The sequence spans 838 residues: Multiphosphoryl transfer protein (838 aa).

A PTS EIIA type-2 domain is found at 7–147; that stretch reads APVTPDLVRL…AVIVAALTGD (141 aa). Residue His-67 is the Tele-phosphohistidine intermediate; for EIIA activity of the active site. A Phosphohistidine; by HPr modification is found at His-67. In terms of domain architecture, HPr spans 161–253; the sequence is AERFEWTIAY…LTAQEKADAE (93 aa). Residue His-175 is the Pros-phosphohistidine intermediate; for HPr activity of the active site. Position 175 is a phosphohistidine; by EI (His-175). A PTS EI region spans residues 274–838; the sequence is AIVGIGASPG…ALEAQREGQA (565 aa). His-460 functions as the Tele-phosphohistidine intermediate; for PTS EI activity in the catalytic mechanism. Phosphohistidine; by autocatalysis is present on His-460. Arg-567 and Arg-603 together coordinate phosphoenolpyruvate. Positions 697 and 721 each coordinate Mg(2+). Phosphoenolpyruvate-binding positions include 720 to 721 and Arg-731; that span reads ND. The active-site Proton donor is the Cys-768.

Belongs to the PEP-utilizing enzyme family. The cofactor is Mg(2+).

Its subcellular location is the cytoplasm. It carries out the reaction L-histidyl-[protein] + phosphoenolpyruvate = N(pros)-phospho-L-histidyl-[protein] + pyruvate. In terms of biological role, the phosphoenolpyruvate-dependent sugar phosphotransferase system (sugar PTS), a major carbohydrate active transport system, catalyzes the phosphorylation of incoming sugar substrates concomitantly with their translocation across the cell membrane. The enzyme II FruAB PTS system is involved in fructose transport. This chain is Multiphosphoryl transfer protein, found in Xanthomonas campestris pv. campestris (strain ATCC 33913 / DSM 3586 / NCPPB 528 / LMG 568 / P 25).